Consider the following 466-residue polypeptide: Ribulose bisphosphate carboxylase large chain (466 aa).

N6,N6,N6-trimethyllysine is present on Lys5. Positions 114 and 164 each coordinate substrate. Lys166 acts as the Proton acceptor in catalysis. Lys168 provides a ligand contact to substrate. Positions 192, 194, and 195 each coordinate Mg(2+). Position 192 is an N6-carboxylysine (Lys192). The Proton acceptor role is filled by His285. Positions 286, 318, and 370 each coordinate substrate.

Belongs to the RuBisCO large chain family. Type I subfamily. Heterohexadecamer of 8 large chains and 8 small chains; disulfide-linked. The disulfide link is formed within the large subunit homodimers. The cofactor is Mg(2+). The disulfide bond which can form in the large chain dimeric partners within the hexadecamer appears to be associated with oxidative stress and protein turnover.

It localises to the plastid. It is found in the chloroplast. It catalyses the reaction 2 (2R)-3-phosphoglycerate + 2 H(+) = D-ribulose 1,5-bisphosphate + CO2 + H2O. The enzyme catalyses D-ribulose 1,5-bisphosphate + O2 = 2-phosphoglycolate + (2R)-3-phosphoglycerate + 2 H(+). Functionally, ruBisCO catalyzes two reactions: the carboxylation of D-ribulose 1,5-bisphosphate, the primary event in carbon dioxide fixation, as well as the oxidative fragmentation of the pentose substrate in the photorespiration process. Both reactions occur simultaneously and in competition at the same active site. This chain is Ribulose bisphosphate carboxylase large chain, found in Silene gallica (Common catchfly).